The sequence spans 436 residues: UPF0597 protein YhaM (436 aa).

This sequence belongs to the UPF0597 family.

This is UPF0597 protein YhaM from Escherichia coli O45:K1 (strain S88 / ExPEC).